Reading from the N-terminus, the 493-residue chain is Lysine--tRNA ligase (493 aa).

Glutamate 404 and glutamate 411 together coordinate Mg(2+).

It belongs to the class-II aminoacyl-tRNA synthetase family. In terms of assembly, homodimer. Mg(2+) is required as a cofactor.

The protein resides in the cytoplasm. It catalyses the reaction tRNA(Lys) + L-lysine + ATP = L-lysyl-tRNA(Lys) + AMP + diphosphate. The chain is Lysine--tRNA ligase from Oceanobacillus iheyensis (strain DSM 14371 / CIP 107618 / JCM 11309 / KCTC 3954 / HTE831).